A 131-amino-acid polypeptide reads, in one-letter code: Arsenate reductase 2 (131 aa).

Residues C10, C82, and C89 each act as nucleophile in the active site. 2 cysteine pairs are disulfide-bonded: C10/C82 and C82/C89.

This sequence belongs to the low molecular weight phosphotyrosine protein phosphatase family. Thioredoxin-coupled ArsC subfamily.

It localises to the cytoplasm. It catalyses the reaction arsenate + [thioredoxin]-dithiol + H(+) = arsenite + [thioredoxin]-disulfide + H2O. Catalyzes the reduction of arsenate [As(V)] to arsenite [As(III)]. This chain is Arsenate reductase 2, found in Staphylococcus epidermidis (strain ATCC 35984 / DSM 28319 / BCRC 17069 / CCUG 31568 / BM 3577 / RP62A).